The primary structure comprises 566 residues: NXPE family member 3 (566 aa).

Residues 1–32 form the signal peptide; sequence MEKYFPKYVPFFSLLALSGLLYLLWSITSLES. Residues Asn-64, Asn-172, Asn-242, Asn-303, and Asn-344 are each glycosylated (N-linked (GlcNAc...) asparagine).

This sequence belongs to the NXPE family.

It is found in the secreted. The protein is NXPE family member 3 (nxpe3) of Danio rerio (Zebrafish).